Reading from the N-terminus, the 123-residue chain is Small ribosomal subunit protein uS13 (123 aa).

Residues 97–123 (PVRGQKTKTNARTRKGPKKTVGRKKKK) are disordered. Over residues 101–123 (QKTKTNARTRKGPKKTVGRKKKK) the composition is skewed to basic residues.

Belongs to the universal ribosomal protein uS13 family. Part of the 30S ribosomal subunit. Forms a loose heterodimer with protein S19. Forms two bridges to the 50S subunit in the 70S ribosome.

Its function is as follows. Located at the top of the head of the 30S subunit, it contacts several helices of the 16S rRNA. In the 70S ribosome it contacts the 23S rRNA (bridge B1a) and protein L5 of the 50S subunit (bridge B1b), connecting the 2 subunits; these bridges are implicated in subunit movement. Contacts the tRNAs in the A and P-sites. This chain is Small ribosomal subunit protein uS13, found in Alkaliphilus oremlandii (strain OhILAs) (Clostridium oremlandii (strain OhILAs)).